The primary structure comprises 360 residues: UDP-N-acetylglucosamine--N-acetylmuramyl-(pentapeptide) pyrophosphoryl-undecaprenol N-acetylglucosamine transferase (360 aa).

Residues Ser198 and Gln289 each coordinate UDP-N-acetyl-alpha-D-glucosamine.

It belongs to the glycosyltransferase 28 family. MurG subfamily.

It localises to the cell membrane. The catalysed reaction is Mur2Ac(oyl-L-Ala-gamma-D-Glu-L-Lys-D-Ala-D-Ala)-di-trans,octa-cis-undecaprenyl diphosphate + UDP-N-acetyl-alpha-D-glucosamine = beta-D-GlcNAc-(1-&gt;4)-Mur2Ac(oyl-L-Ala-gamma-D-Glu-L-Lys-D-Ala-D-Ala)-di-trans,octa-cis-undecaprenyl diphosphate + UDP + H(+). Its pathway is cell wall biogenesis; peptidoglycan biosynthesis. Functionally, cell wall formation. Catalyzes the transfer of a GlcNAc subunit on undecaprenyl-pyrophosphoryl-MurNAc-pentapeptide (lipid intermediate I) to form undecaprenyl-pyrophosphoryl-MurNAc-(pentapeptide)GlcNAc (lipid intermediate II). This is UDP-N-acetylglucosamine--N-acetylmuramyl-(pentapeptide) pyrophosphoryl-undecaprenol N-acetylglucosamine transferase from Streptococcus pyogenes serotype M6 (strain ATCC BAA-946 / MGAS10394).